The following is a 34-amino-acid chain: Protein MgtT (34 aa).

Residues 1-34 are disordered; sequence MNGDNPSPNRPLVTVVYKGPDFYDGEKKPPVNRR. Over residues 24-34 the composition is skewed to basic and acidic residues; the sequence is DGEKKPPVNRR.

The sequence is that of Protein MgtT from Escherichia coli (strain K12).